The sequence spans 284 residues: Bifunctional protein FolD (284 aa).

Residues 166-168 (GRS) and Ser-191 each bind NADP(+).

It belongs to the tetrahydrofolate dehydrogenase/cyclohydrolase family. As to quaternary structure, homodimer.

It catalyses the reaction (6R)-5,10-methylene-5,6,7,8-tetrahydrofolate + NADP(+) = (6R)-5,10-methenyltetrahydrofolate + NADPH. It carries out the reaction (6R)-5,10-methenyltetrahydrofolate + H2O = (6R)-10-formyltetrahydrofolate + H(+). The protein operates within one-carbon metabolism; tetrahydrofolate interconversion. In terms of biological role, catalyzes the oxidation of 5,10-methylenetetrahydrofolate to 5,10-methenyltetrahydrofolate and then the hydrolysis of 5,10-methenyltetrahydrofolate to 10-formyltetrahydrofolate. The sequence is that of Bifunctional protein FolD from Leptospira borgpetersenii serovar Hardjo-bovis (strain JB197).